The sequence spans 402 residues: Dihydrolipoyllysine-residue acetyltransferase component of pyruvate dehydrogenase complex (402 aa).

The Lipoyl-binding domain occupies 1–69 (MPDIGLEEVE…KTSSIIMIFK (69 aa)). The residue at position 35 (Lys-35) is an N6-lipoyllysine. The Peripheral subunit-binding (PSBD) domain occupies 109–146 (HATPVVRRLARHLNVDLKNITPSGPKNRILKEDIELYI). His-375 is an active-site residue.

The protein belongs to the 2-oxoacid dehydrogenase family. In terms of assembly, forms a 24-polypeptide structural core with octahedral symmetry. It depends on (R)-lipoate as a cofactor.

The catalysed reaction is N(6)-[(R)-dihydrolipoyl]-L-lysyl-[protein] + acetyl-CoA = N(6)-[(R)-S(8)-acetyldihydrolipoyl]-L-lysyl-[protein] + CoA. In terms of biological role, the pyruvate dehydrogenase complex catalyzes the overall conversion of pyruvate to acetyl-CoA and CO(2). It contains multiple copies of three enzymatic components: pyruvate dehydrogenase (E1), dihydrolipoamide acetyltransferase (E2) and lipoamide dehydrogenase (E3). This Buchnera aphidicola subsp. Schizaphis graminum (strain Sg) protein is Dihydrolipoyllysine-residue acetyltransferase component of pyruvate dehydrogenase complex (aceF).